A 1094-amino-acid chain; its full sequence is Transcriptional regulator CRZ1 (1094 aa).

4 disordered regions span residues 1-29, 44-81, 93-428, and 477-519; these read MADP…STSS, FNSD…LDMM, GRRQ…FPPS, and RAGA…RTLS. Basic and acidic residues-rich tracts occupy residues 60–78 and 94–103; these read QARK…KRYL and RRQESLRKES. Position 103 is a phosphoserine (Ser103). Residues 148–159 show a composition bias toward low complexity; sequence PNQPQQPSQQPP. 2 stretches are compositionally biased toward polar residues: residues 166-187 and 201-217; these read SEQS…QSSG and GTTS…QISP. 2 stretches are compositionally biased toward low complexity: residues 228 to 241 and 252 to 262; these read QPPQ…QQQQ and EQQQQYAQGEG. Positions 286–324 are enriched in polar residues; the sequence is VISNTSHPSQYPSRTSSPFPQQSQSNMVPASTVNQTRTE. Residues Ser288 and Ser329 each carry the phosphoserine modification. Residues 325–342 show a composition bias toward low complexity; sequence SFPASRSPSPFAPQQASQ. 2 stretches are compositionally biased toward polar residues: residues 343 to 379 and 396 to 412; these read TEAS…FNKP and IVTQ…LNQP. Low complexity predominate over residues 477 to 493; it reads RAGAARGAQRQGPQGQG. The span at 507–519 shows a compositional bias: polar residues; sequence PSPQSHPLPRTLS. Residues Ser508, Ser569, Ser765, and Ser810 each carry the phosphoserine modification. A disordered region spans residues 835-888; the sequence is ITGDDGSLLPPSNRGHAMSHSRHSSTSSIRSASPALSISSQGSSFSHHSPRMDM. A compositionally biased stretch (low complexity) spans 858-881; sequence SSTSSIRSASPALSISSQGSSFSH. Residues 944-968 form a C2H2-type 1 zinc finger; sequence FKCPVPGCGSTFTRHFNLKGHLRSH. The C2H2-type 2; degenerate zinc-finger motif lies at 1007 to 1029; that stretch reads FECEGCGKKFARLDALTRHHKSE. The disordered stretch occupies residues 1037-1094; sequence THPLPTNFDGSPMSESQYKTYKGIKSTPEGSGRRLSSTASGSGSGKRRSKKSETSEED.

In terms of processing, phosphorylated. Dephosphorylated by calcineurin (CNA1) which promotes nuclear localization.

The protein localises to the cytoplasm. It localises to the cytosol. The protein resides in the nucleus. Its function is as follows. DNA-binding transcriptional activator that interacts with calcineurin-dependent response element (CDRE) promoters. Activates expression of genes required to maintain cell wall integrity during stress. Activates expression of genes required for transepithelial migration through the host blood-brain barrier. Required for adaptation to host temperature during infection. The protein is Transcriptional regulator CRZ1 of Cryptococcus neoformans var. grubii serotype A (strain H99 / ATCC 208821 / CBS 10515 / FGSC 9487) (Filobasidiella neoformans var. grubii).